The sequence spans 571 residues: Adenine deaminase (571 aa).

The protein belongs to the metallo-dependent hydrolases superfamily. Adenine deaminase family. Mn(2+) is required as a cofactor.

It catalyses the reaction adenine + H2O + H(+) = hypoxanthine + NH4(+). In Dehalococcoides mccartyi (strain ATCC BAA-2100 / JCM 16839 / KCTC 5957 / BAV1), this protein is Adenine deaminase.